The sequence spans 249 residues: tRNA (guanine-N(1)-)-methyltransferase (249 aa).

S-adenosyl-L-methionine is bound by residues G116 and 136–141 (IGDYIL).

This sequence belongs to the RNA methyltransferase TrmD family. Homodimer.

The protein localises to the cytoplasm. It carries out the reaction guanosine(37) in tRNA + S-adenosyl-L-methionine = N(1)-methylguanosine(37) in tRNA + S-adenosyl-L-homocysteine + H(+). Its function is as follows. Specifically methylates guanosine-37 in various tRNAs. This is tRNA (guanine-N(1)-)-methyltransferase from Zymomonas mobilis subsp. mobilis (strain ATCC 31821 / ZM4 / CP4).